We begin with the raw amino-acid sequence, 81 residues long: GAMMA-ctenitoxin-Pn1a (81 aa).

A signal peptide spans 1–16 (MKVAIVFLSLLVLAFA). The propeptide occupies 17 to 34 (SESIEENREEFPVEESAR). 5 disulfides stabilise this stretch: Cys-35–Cys-49, Cys-42–Cys-55, Cys-46–Cys-81, Cys-48–Cys-65, and Cys-57–Cys-63.

Belongs to the neurotoxin 03 (Tx2) family. 05 subfamily. In terms of tissue distribution, expressed by the venom gland.

The protein localises to the secreted. Its function is as follows. This insecticidal neurotoxin targets two types of channels/receptors. It reversibly inhibits the N-methyl-D-aspartate (NMDA)-subtype of ionotropic glutamate receptor (GRIN). It inhibits glutamate uptake from rat brain synaptosomes, and blocks GRIN in hippocampal slices. It also acts on sodium channels of both insects and mammals. On sodium channel insects, it strongly slows down channel inactivation (EC(50)=212.5 nM) and causes an increase (105%) in peak amplitude (at 1 uM) of B.germanica sodium channel (Nav), whereas it inhibits all mammalien sodium channels tested with the following order of potency: Nav1.3/SCN3A (IC(50)=1.5 uM) &gt; Nav1.6/SCN8A &gt; Nav1.5/SCN5A &gt; Nav1.4/SCN4A &gt;= Nav1.2/SCN2A. In vivo, it is highly toxic to house fly (Musca domestica), cockroach (Periplaneta americana), and cricket (Acheta domesticus). In different rat pain models (induced by PGE2, carrageenan or glutamate), it shows antinociceptive effect that may be related to an inhibitory activity on the glutamatergic system. The chain is GAMMA-ctenitoxin-Pn1a from Phoneutria nigriventer (Brazilian armed spider).